Consider the following 139-residue polypeptide: UDP-glucose 4-epimerase (139 aa).

Residues 11 to 12 (YI), 31 to 36 (DNLCNS), 58 to 59 (DI), 80 to 84 (FAGLK), N99, and S124 contribute to the NAD(+) site. Position 124 (S124) interacts with substrate. The active-site Proton acceptor is the Y136.

Belongs to the NAD(P)-dependent epimerase/dehydratase family. As to quaternary structure, homodimer. NAD(+) is required as a cofactor.

The catalysed reaction is UDP-alpha-D-glucose = UDP-alpha-D-galactose. Its pathway is carbohydrate metabolism; galactose metabolism. In terms of biological role, involved in the metabolism of galactose. Catalyzes the conversion of UDP-galactose (UDP-Gal) to UDP-glucose (UDP-Glc) through a mechanism involving the transient reduction of NAD. The chain is UDP-glucose 4-epimerase (galE) from Klebsiella pneumoniae.